Consider the following 150-residue polypeptide: Azurin (150 aa).

An N-terminal signal peptide occupies residues 1–21 (MFKQVLGGMALMAAFSAPVLA). The 129-residue stretch at 22 to 150 (AECSVDIAGT…LMKGTLKLVD (129 aa)) folds into the Plastocyanin-like domain. Cys24 and Cys47 are oxidised to a cystine. Residues His67, Cys133, His138, and Met142 each coordinate Cu cation.

Its subcellular location is the periplasm. This Bordetella bronchiseptica (strain ATCC BAA-588 / NCTC 13252 / RB50) (Alcaligenes bronchisepticus) protein is Azurin.